We begin with the raw amino-acid sequence, 180 residues long: ATP synthase subunit b 2 (180 aa).

A helical membrane pass occupies residues 33-53 (IFWLLVTLVAIYFLLTRVALP).

Belongs to the ATPase B chain family. In terms of assembly, F-type ATPases have 2 components, F(1) - the catalytic core - and F(0) - the membrane proton channel. F(1) has five subunits: alpha(3), beta(3), gamma(1), delta(1), epsilon(1). F(0) has three main subunits: a(1), b(2) and c(10-14). The alpha and beta chains form an alternating ring which encloses part of the gamma chain. F(1) is attached to F(0) by a central stalk formed by the gamma and epsilon chains, while a peripheral stalk is formed by the delta and b chains.

The protein resides in the cell inner membrane. Its function is as follows. F(1)F(0) ATP synthase produces ATP from ADP in the presence of a proton or sodium gradient. F-type ATPases consist of two structural domains, F(1) containing the extramembraneous catalytic core and F(0) containing the membrane proton channel, linked together by a central stalk and a peripheral stalk. During catalysis, ATP synthesis in the catalytic domain of F(1) is coupled via a rotary mechanism of the central stalk subunits to proton translocation. In terms of biological role, component of the F(0) channel, it forms part of the peripheral stalk, linking F(1) to F(0). The b'-subunit is a diverged and duplicated form of b found in plants and photosynthetic bacteria. The polypeptide is ATP synthase subunit b 2 (atpF2) (Cereibacter sphaeroides (strain ATCC 17025 / ATH 2.4.3) (Rhodobacter sphaeroides)).